A 742-amino-acid chain; its full sequence is 2'-5'-oligoadenylate synthase 2 (742 aa).

Residues 1 to 35 (MGNWLTGNWSSDRSSGYSSGWSPGGSSGVPSGPVH) form a disordered region. The N-myristoyl glycine moiety is linked to residue Gly-2. A compositionally biased stretch (low complexity) spans 10-21 (SSDRSSGYSSGW). 2 OAS domain regions span residues 60-374 (VPSQ…YWDV) and 382-721 (TPSH…WKVP). Lys-417 carries the post-translational modification N6-acetyllysine. Ser-436 is an ATP binding site. Mg(2+) contacts are provided by Asp-448, Asp-450, and Asp-519. ATP contacts are provided by Arg-582 and Lys-585.

Belongs to the 2-5A synthase family. In terms of assembly, homodimer. Mg(2+) is required as a cofactor. Post-translationally, myristoylation is not essential for its activity. Glycosylated. Glycosylation is essential for its activity. In terms of tissue distribution, expressed in the uterus. Expressed in mammary glands: expressed at low level before the establishment of lactation, then expression strongly increases, and subsequently decreases during early involution.

Its subcellular location is the cytoplasm. The protein resides in the perinuclear region. The enzyme catalyses 3 ATP = 5'-triphosphoadenylyl-(2'-&gt;5')-adenylyl-(2'-&gt;5')-adenosine + 2 diphosphate. Produced as a latent enzyme which is activated by double stranded RNA (dsRNA) generated during the course of viral infection. The dsRNA activator must be at least 15 nucleotides long, and no modification of the 2'-hydroxyl group is tolerated. ssRNA or dsDNA do not act as activators. Strongly inhibited by copper, iron and zinc ions. Partially inhibited by cobalt and nickel ions. Its function is as follows. Interferon-induced, dsRNA-activated antiviral enzyme which plays a critical role in cellular innate antiviral response. Activated by detection of double stranded RNA (dsRNA): polymerizes higher oligomers of 2'-5'-oligoadenylates (2-5A) from ATP which then bind to the inactive monomeric form of ribonuclease L (RNASEL) leading to its dimerization and subsequent activation. Activation of RNASEL leads to degradation of cellular as well as viral RNA, resulting in the inhibition of protein synthesis, thus terminating viral replication. Can mediate the antiviral effect via the classical RNASEL-dependent pathway or an alternative antiviral pathway independent of RNASEL. In addition, it may also play a role in other cellular processes such as apoptosis, cell growth, differentiation and gene regulation. May act as a negative regulator of lactation, stopping lactation in virally infected mammary gland lobules, thereby preventing transmission of viruses to neonates. Non-infected lobules would not be affected, allowing efficient pup feeding during infection. This chain is 2'-5'-oligoadenylate synthase 2, found in Mus musculus (Mouse).